The sequence spans 526 residues: tRNA (guanine(26)-N(2))-dimethyltransferase (526 aa).

A compositionally biased stretch (polar residues) spans 1–10 (MTENVNSSGD). Residues 1 to 20 (MTENVNSSGDSAIKSEDKEE) form a disordered region. A Trm1 methyltransferase domain is found at 22–441 (TVIQEGQAKV…APMHLLWDIY (420 aa)). S-adenosyl-L-methionine contacts are provided by Arg47, Arg104, and Asp122. Cys286, Cys289, Cys325, and Cys328 together coordinate Zn(2+). The tract at residues 498-526 (KGKNWGPRQKAKGSVNSTKAGFQLTEHKE) is disordered.

Belongs to the class I-like SAM-binding methyltransferase superfamily. Trm1 family.

The enzyme catalyses guanosine(26) in tRNA + 2 S-adenosyl-L-methionine = N(2)-dimethylguanosine(26) in tRNA + 2 S-adenosyl-L-homocysteine + 2 H(+). In terms of biological role, dimethylates a single guanine residue at position 26 of most tRNAs using S-adenosyl-L-methionine as donor of the methyl groups. The sequence is that of tRNA (guanine(26)-N(2))-dimethyltransferase (trm-1) from Caenorhabditis elegans.